Consider the following 477-residue polypeptide: Glutamate--tRNA ligase 1 (477 aa).

Positions 12-22 match the 'HIGH' region motif; it reads PSPTGALHLGN. Residues 253–257 carry the 'KMSKS' region motif; it reads PLSKR. Position 256 (K256) interacts with ATP.

Belongs to the class-I aminoacyl-tRNA synthetase family. Glutamate--tRNA ligase type 1 subfamily. Monomer.

Its subcellular location is the cytoplasm. It catalyses the reaction tRNA(Glu) + L-glutamate + ATP = L-glutamyl-tRNA(Glu) + AMP + diphosphate. Its function is as follows. Catalyzes the attachment of glutamate to tRNA(Glu) in a two-step reaction: glutamate is first activated by ATP to form Glu-AMP and then transferred to the acceptor end of tRNA(Glu). This chain is Glutamate--tRNA ligase 1, found in Halorhodospira halophila (strain DSM 244 / SL1) (Ectothiorhodospira halophila (strain DSM 244 / SL1)).